Consider the following 178-residue polypeptide: Caveolin-1 (178 aa).

S2 is modified (N-acetylserine). The residue at position 2 (S2) is a Phosphoserine. The tract at residues 2 to 94 (SGGKYVDSEG…WKASFTTFTV (93 aa)) is required for homooligomerization. Topologically, residues 2-104 (SGGKYVDSEG…TKYWFYRLLS (103 aa)) are cytoplasmic. K5 is subject to N6-acetyllysine; alternate. K5 participates in a covalent cross-link: Glycyl lysine isopeptide (Lys-Gly) (interchain with G-Cter in ubiquitin); alternate. Y6 bears the Phosphotyrosine mark. At S9 the chain carries Phosphoserine. The residue at position 14 (Y14) is a Phosphotyrosine; by ABL1. Y25 carries the post-translational modification Phosphotyrosine. Glycyl lysine isopeptide (Lys-Gly) (interchain with G-Cter in ubiquitin) cross-links involve residues K26, K30, K39, K47, and K57. The tract at residues 82 to 94 (DGIWKASFTTFTV) is interaction with CAVIN3. Residues 105 to 125 (ALFGIPMALIWGIYFAILSFL) constitute an intramembrane region (helical). Over 126–178 (HIWAVVPCIKSFLIEIQCVSRVYSIYVHTFCDPFFEAVGKIFSSIRINMQKEI) the chain is Cytoplasmic. The tract at residues 131–142 (VPCIKSFLIEIQ) is interacts with SPRY1, SPRY2, SPRY3 and SPRY4. S-palmitoyl cysteine attachment occurs at residues C133, C143, and C156. The tract at residues 149–160 (SIYVHTFCDPFF) is interacts with SPRY1, SPRY2, and SPRY4. The interacts with SPRY1, SPRY2, SPRY3 and SPRY4 stretch occupies residues 167 to 178 (FSSIRINMQKEI).

This sequence belongs to the caveolin family. Homooligomer. Interacts with GLIPR2. Interacts with NOSTRIN. Interacts with SNAP25 and STX1A. Interacts (via the N-terminus) with DPP4; the interaction is direct. Interacts with CTNNB1, CDH1 and JUP. Interacts with PACSIN2; this interaction induces membrane tubulation. Interacts with SLC7A9. Interacts with BMX and BTK. Interacts with TGFBR1. Interacts with CAVIN3 (via leucine-zipper domain) in a cholesterol-sensitive manner. Interacts with CAVIN1. Interacts with EHD2 in a cholesterol-dependent manner. Forms a ternary complex with UBXN6 and VCP; mediates CAV1 targeting to lysosomes for degradation. Interacts with ABCG1; this interaction regulates ABCG1-mediated cholesterol efflux. Interacts with NEU3; this interaction enhances NEU3 sialidase activity within caveola. Interacts (via C-terminus) with SPRY1, SPRY2 (via C-terminus), SPRY3, and SPRY4. Interacts with IGFBP5; this interaction allows trafficking of IGFBP5 from the plasma membrane to the nucleus. Post-translationally, phosphorylated at Tyr-14 by ABL1 in response to oxidative stress. In terms of processing, ubiquitinated. Undergo monoubiquitination and multi- and/or polyubiquitination. Monoubiquitination of N-terminal lysines promotes integration in a ternary complex with UBXN6 and VCP which promotes oligomeric CAV1 targeting to lysosomes for degradation. Ubiquitinated by ZNRF1; leading to degradation and modulation of the TLR4-mediated immune response.

It is found in the golgi apparatus membrane. The protein resides in the cell membrane. Its subcellular location is the membrane. It localises to the caveola. The protein localises to the membrane raft. Its function is as follows. May act as a scaffolding protein within caveolar membranes. Forms a stable heterooligomeric complex with CAV2 that targets to lipid rafts and drives caveolae formation. Mediates the recruitment of CAVIN proteins (CAVIN1/2/3/4) to the caveolae. Interacts directly with G-protein alpha subunits and can functionally regulate their activity. Involved in the costimulatory signal essential for T-cell receptor (TCR)-mediated T-cell activation. Its binding to DPP4 induces T-cell proliferation and NF-kappa-B activation in a T-cell receptor/CD3-dependent manner. Recruits CTNNB1 to caveolar membranes and may regulate CTNNB1-mediated signaling through the Wnt pathway. Negatively regulates TGFB1-mediated activation of SMAD2/3 by mediating the internalization of TGFBR1 from membrane rafts leading to its subsequent degradation. Binds 20(S)-hydroxycholesterol (20(S)-OHC). In Mustela putorius furo (European domestic ferret), this protein is Caveolin-1 (CAV1).